The chain runs to 338 residues: Glyceraldehyde-3-phosphate dehydrogenase (338 aa).

NAD(+)-binding positions include 13–14 (RI), D35, and R80. D-glyceraldehyde 3-phosphate-binding positions include 151 to 153 (SCT), T182, 211 to 212 (TG), and R234. C152 acts as the Nucleophile in catalysis. NAD(+) is bound at residue N316.

It belongs to the glyceraldehyde-3-phosphate dehydrogenase family. As to quaternary structure, homotetramer.

The protein resides in the cytoplasm. It carries out the reaction D-glyceraldehyde 3-phosphate + phosphate + NAD(+) = (2R)-3-phospho-glyceroyl phosphate + NADH + H(+). The protein operates within carbohydrate degradation; glycolysis; pyruvate from D-glyceraldehyde 3-phosphate: step 1/5. This chain is Glyceraldehyde-3-phosphate dehydrogenase (GPDA), found in Colletotrichum gloeosporioides (Anthracnose fungus).